An 885-amino-acid chain; its full sequence is Rho GTPase-activating protein gacFF (885 aa).

Over residues 168–182 (TTTNNSNNSNSNNNN) the composition is skewed to low complexity. The disordered stretch occupies residues 168 to 187 (TTTNNSNNSNSNNNNKQYNS). Residues 222–249 (LINKIQNDSEQLKLVLSQVEQQIEFLKS) are a coiled coil. Residues 348–394 (SDIFSLLPTHLTLYVFSYLEPKELLILAQVSSQWQKLAGDNLLWVRF) enclose the F-box domain. A PH domain is found at 464–571 (SSSKEGWLYK…WMILLNSIIK (108 aa)). Low complexity-rich tracts occupy residues 594–622 (NNVY…NNNN) and 629–648 (LPPL…SSTG). Positions 594 to 680 (NNVYINNNNN…GGGSGGNNNF (87 aa)) are disordered. A Rho-GAP domain is found at 701 to 885 (VALSKILENQ…KYYDEIFIKK (185 aa)).

The protein localises to the cytoplasm. Its function is as follows. Rho GTPase-activating protein involved in the signal transduction pathway. The chain is Rho GTPase-activating protein gacFF (gacFF) from Dictyostelium discoideum (Social amoeba).